We begin with the raw amino-acid sequence, 519 residues long: Phosphate acetyltransferase (519 aa).

A phosphate acetyltransferase region spans residues 196 to 519 (AFQRSLEKKA…LISAIQAQDY (324 aa)).

This sequence in the N-terminal section; belongs to the CobB/CobQ family. It in the C-terminal section; belongs to the phosphate acetyltransferase and butyryltransferase family.

It localises to the cytoplasm. The catalysed reaction is acetyl-CoA + phosphate = acetyl phosphate + CoA. It functions in the pathway metabolic intermediate biosynthesis; acetyl-CoA biosynthesis; acetyl-CoA from acetate: step 2/2. In Helicobacter pylori (strain J99 / ATCC 700824) (Campylobacter pylori J99), this protein is Phosphate acetyltransferase (pta).